A 102-amino-acid chain; its full sequence is MKIAVMGDPDTALGFKLAGAHEVYSFGSSPLEIERANNKLKELVERDDIGIILITETLAQRVEVPEVEFPIILQIPDKSGSRFGEAQLREIVRRAIGVELKR.

It belongs to the V-ATPase F subunit family. As to quaternary structure, has multiple subunits with at least A(3), B(3), C, D, E, F, H, I and proteolipid K(x).

It localises to the cell membrane. In terms of biological role, component of the A-type ATP synthase that produces ATP from ADP in the presence of a proton gradient across the membrane. The sequence is that of A-type ATP synthase subunit F from Thermococcus gammatolerans (strain DSM 15229 / JCM 11827 / EJ3).